The sequence spans 191 residues: Peptidyl-tRNA hydrolase (191 aa).

Tyr17 provides a ligand contact to tRNA. His22 acts as the Proton acceptor in catalysis. Residues Tyr68, Asn70, and Asn116 each coordinate tRNA.

It belongs to the PTH family. As to quaternary structure, monomer.

It localises to the cytoplasm. The catalysed reaction is an N-acyl-L-alpha-aminoacyl-tRNA + H2O = an N-acyl-L-amino acid + a tRNA + H(+). Hydrolyzes ribosome-free peptidyl-tRNAs (with 1 or more amino acids incorporated), which drop off the ribosome during protein synthesis, or as a result of ribosome stalling. Functionally, catalyzes the release of premature peptidyl moieties from peptidyl-tRNA molecules trapped in stalled 50S ribosomal subunits, and thus maintains levels of free tRNAs and 50S ribosomes. This is Peptidyl-tRNA hydrolase from Francisella tularensis subsp. mediasiatica (strain FSC147).